Reading from the N-terminus, the 262-residue chain is Spindlin-1 (262 aa).

The disordered stretch occupies residues 1-51 (MKTPFGKTPGQRSRADAGHAGVSANMMKKRTSHKKHRSSVGPSKPVSQPRR). Residues lysine 7 and lysine 28 each participate in a glycyl lysine isopeptide (Lys-Gly) (interchain with G-Cter in SUMO2) cross-link. Residues 27–38 (MKKRTSHKKHRS) show a composition bias toward basic residues. The residue at position 44 (lysine 44) is an N6-acetyllysine; alternate. A Glycyl lysine isopeptide (Lys-Gly) (interchain with G-Cter in SUMO2); alternate cross-link involves residue lysine 44. The tudor-like domain 1 stretch occupies residues 53-116 (IVGCRIQHGW…RVSALEVLPD (64 aa)). The tract at residues 93–98 (GFDCVY) is histone H3K4me3 and H3R8me2a binding. Phosphoserine; by AURKA occurs at positions 109 and 124. The tract at residues 132-193 (MIGKAVEHMF…DYKEGDLRIM (62 aa)) is tudor-like domain 2. Residue glutamate 142 is a region of interest, histone H3K4me3 and H3R8me2a binding. A Phosphoserine modification is found at serine 199. The interval 213–262 (LVGKQVEYAKEDGSKRTGMVIHQVEAKPSVYFIKFDDDFHIYVYDLVKTS) is tudor-like domain 3. The histone H3K4me3 and H3R8me2a binding stretch occupies residues 250-252 (DFH).

The protein belongs to the SPIN/STSY family. Homodimer; may form higher-order oligomers. Interacts with TCF7L2/TCF4; the interaction is direct. Interacts with HABP4 and SERBP1. Interacts with SPINDOC; SPINDOC stabilizes SPIN1 and enhances its association with bivalent H3K4me3K9me3 mark. Interacts with SPOCD1; promoting recruitment of PIWIL4 and SPOCD1 to transposons. Post-translationally, phosphorylated during oocyte meiotic maturation. As to expression, highly expressed in ovarian cancer tissues.

The protein resides in the nucleus. Its subcellular location is the nucleolus. Chromatin reader that specifically recognizes and binds histone H3 both trimethylated at 'Lys-4' and 'Lys-9' (H3K4me3K9me3) and is involved in piRNA-mediated retrotransposon silencing during spermatogenesis. Plays a key role in the initiation of the PIWIL4-piRNA pathway, a pathway that directs transposon DNA methylation and silencing in the male embryonic germ cells, by promoting recruitment of DNA methylation machinery to transposons: binds young, but not old, LINE1 transposons, which are specifically marked with H3K4me3K9me3, and promotes the recruitment of PIWIL4 and SPOCD1 to transposons, leading to piRNA-directed DNA methylation. Also recognizes and binds histone H3 both trimethylated at 'Lys-4' and asymmetrically dimethylated at 'Arg-8' (H3K4me3 and H3R8me2a) and acts as an activator of Wnt signaling pathway downstream of PRMT2. In case of cancer, promotes cell cancer proliferation via activation of the Wnt signaling pathway. Overexpression induces metaphase arrest and chromosomal instability. Localizes to active rDNA loci and promotes the expression of rRNA genes. May play a role in cell-cycle regulation during the transition from gamete to embryo. Involved in oocyte meiotic resumption, a process that takes place before ovulation to resume meiosis of oocytes blocked in prophase I: may act by regulating maternal transcripts to control meiotic resumption. The polypeptide is Spindlin-1 (Homo sapiens (Human)).